The primary structure comprises 211 residues: MSVTALGMMLIAYLCGSVSSAILFCKITGLPDPRLHGSGNPGATNVLRIGGKAAAATVLVFDILKGMLPVWGAYALGVTPLYLGLTAIAACLGHIYPVFFHFRGGKGVATALGAIAPIGLDLTGLMTGTWLLTVLLSGYSSLGAIVSALIAPFYVWWFKPQFTFPVAMLSCLILMRHHDNIQRLWRGQESKIWDKLRKKKQPEDEDTSPEE.

5 helical membrane-spanning segments follow: residues 5-25 (ALGMMLIAYLCGSVSSAILFC), 58-78 (VLVFDILKGMLPVWGAYALGV), 80-100 (PLYLGLTAIAACLGHIYPVFF), 112-132 (LGAIAPIGLDLTGLMTGTWLL), and 138-158 (GYSSLGAIVSALIAPFYVWWF).

This sequence belongs to the PlsY family. Probably interacts with PlsX.

The protein resides in the cell inner membrane. The enzyme catalyses an acyl phosphate + sn-glycerol 3-phosphate = a 1-acyl-sn-glycero-3-phosphate + phosphate. Its pathway is lipid metabolism; phospholipid metabolism. Its function is as follows. Catalyzes the transfer of an acyl group from acyl-phosphate (acyl-PO(4)) to glycerol-3-phosphate (G3P) to form lysophosphatidic acid (LPA). This enzyme utilizes acyl-phosphate as fatty acyl donor, but not acyl-CoA or acyl-ACP. In Pectobacterium atrosepticum (strain SCRI 1043 / ATCC BAA-672) (Erwinia carotovora subsp. atroseptica), this protein is Glycerol-3-phosphate acyltransferase.